The sequence spans 560 residues: MFS siderochrome iron transporter 1 (560 aa).

An N-linked (GlcNAc...) asparagine glycan is attached at asparagine 29. Transmembrane regions (helical) follow at residues 53 to 73, 90 to 110, 115 to 135, 146 to 166, 177 to 194, 211 to 231, 264 to 284, 291 to 311, 331 to 351, 354 to 374, and 379 to 399; these read LWLT…LVSV, LLAS…LTLA, VWGR…ALIM, VAAH…VDVM, MIMF…TFAG, FGAF…IMLF, VVGI…FSIV, WATG…AIFL, PTII…LLTI, AGYV…GIGL, and FKWA…LLIP. The N-linked (GlcNAc...) asparagine glycan is linked to asparagine 404. 3 helical membrane-spanning segments follow: residues 407-427, 441-461, and 522-542; these read IGAV…FSVC, VAVV…VGLA, and VIAG…WRNV.

The protein belongs to the major facilitator superfamily.

Its subcellular location is the membrane. In terms of biological role, major facilitator transporter involved in siderophore transport. This Ajellomyces capsulatus (Darling's disease fungus) protein is MFS siderochrome iron transporter 1.